We begin with the raw amino-acid sequence, 589 residues long: ATP-dependent lipid A-core flippase (589 aa).

The next 5 helical transmembrane spans lie at 23–43 (WPIF…DAGF), 60–80 (LVFI…RGAA), 153–173 (VGLL…FLVI), 249–269 (VGTS…LFFA), and 272–292 (PSFH…IMML). The region spanning 27–307 (LIGVVGMIAV…LTMVNSYIQK (281 aa)) is the ABC transmembrane type-1 domain. One can recognise an ABC transporter domain in the interval 339-575 (IEYQGVSFAY…NGAYAELYRM (237 aa)). 373–380 (GRSGAGKS) serves as a coordination point for ATP.

It belongs to the ABC transporter superfamily. Lipid exporter (TC 3.A.1.106) family. As to quaternary structure, homodimer.

It localises to the cell inner membrane. The catalysed reaction is ATP + H2O + lipid A-core oligosaccharideSide 1 = ADP + phosphate + lipid A-core oligosaccharideSide 2.. Functionally, involved in lipopolysaccharide (LPS) biosynthesis. Translocates lipid A-core from the inner to the outer leaflet of the inner membrane. Transmembrane domains (TMD) form a pore in the inner membrane and the ATP-binding domain (NBD) is responsible for energy generation. This chain is ATP-dependent lipid A-core flippase, found in Coxiella burnetii (strain RSA 493 / Nine Mile phase I).